Here is a 442-residue protein sequence, read N- to C-terminus: Transposase InsG for insertion sequence element IS4 (442 aa).

The protein belongs to the transposase 11 family.

Involved in the transposition of the insertion sequence IS4. The sequence is that of Transposase InsG for insertion sequence element IS4 (insG) from Escherichia coli (strain K12).